We begin with the raw amino-acid sequence, 433 residues long: Signal recognition particle 54 kDa protein (433 aa).

GTP-binding positions include 106–113, 186–190, and 244–247; these read GVEGSGKT, DTAGR, and TKMD.

Belongs to the GTP-binding SRP family. SRP54 subfamily. In terms of assembly, part of the signal recognition particle protein translocation system, which is composed of SRP and FtsY. Archaeal SRP consists of a 7S RNA molecule of 300 nucleotides and two protein subunits: SRP54 and SRP19.

Its subcellular location is the cytoplasm. The enzyme catalyses GTP + H2O = GDP + phosphate + H(+). In terms of biological role, involved in targeting and insertion of nascent membrane proteins into the cytoplasmic membrane. Binds to the hydrophobic signal sequence of the ribosome-nascent chain (RNC) as it emerges from the ribosomes. The SRP-RNC complex is then targeted to the cytoplasmic membrane where it interacts with the SRP receptor FtsY. The sequence is that of Signal recognition particle 54 kDa protein from Pyrobaculum islandicum (strain DSM 4184 / JCM 9189 / GEO3).